The chain runs to 24 residues: M-ectatotoxin-Eb2b (24 aa).

In terms of tissue distribution, expressed by the venom gland.

Its subcellular location is the secreted. Its function is as follows. Antimicrobial peptide active against Gram-negative bacterium E.coli MH1 (MIC=2.5 uM) and P.aeruginosa PAO1 (MIC=10 uM) and against Gram-positive bacterium A.globiformis VKM Ac-1112 (MIC=0.6 uM). The protein is M-ectatotoxin-Eb2b of Ectatomma brunneum (Ant).